The following is a 131-amino-acid chain: Large ribosomal subunit protein bL12 (131 aa).

It belongs to the bacterial ribosomal protein bL12 family. In terms of assembly, homodimer. Part of the ribosomal stalk of the 50S ribosomal subunit. Forms a multimeric L10(L12)X complex, where L10 forms an elongated spine to which 2 to 4 L12 dimers bind in a sequential fashion. Binds GTP-bound translation factors.

Forms part of the ribosomal stalk which helps the ribosome interact with GTP-bound translation factors. Is thus essential for accurate translation. The polypeptide is Large ribosomal subunit protein bL12 (Tropheryma whipplei (strain Twist) (Whipple's bacillus)).